The sequence spans 305 residues: UDP-3-O-acyl-N-acetylglucosamine deacetylase (305 aa).

The Zn(2+) site is built by His78, His237, and Asp241. His264 serves as the catalytic Proton donor.

It belongs to the LpxC family. Zn(2+) serves as cofactor.

The catalysed reaction is a UDP-3-O-[(3R)-3-hydroxyacyl]-N-acetyl-alpha-D-glucosamine + H2O = a UDP-3-O-[(3R)-3-hydroxyacyl]-alpha-D-glucosamine + acetate. It participates in glycolipid biosynthesis; lipid IV(A) biosynthesis; lipid IV(A) from (3R)-3-hydroxytetradecanoyl-[acyl-carrier-protein] and UDP-N-acetyl-alpha-D-glucosamine: step 2/6. Catalyzes the hydrolysis of UDP-3-O-myristoyl-N-acetylglucosamine to form UDP-3-O-myristoylglucosamine and acetate, the committed step in lipid A biosynthesis. This chain is UDP-3-O-acyl-N-acetylglucosamine deacetylase, found in Paraburkholderia phytofirmans (strain DSM 17436 / LMG 22146 / PsJN) (Burkholderia phytofirmans).